The sequence spans 375 residues: Dual-specificity RNA methyltransferase RlmN (375 aa).

The active-site Proton acceptor is Glu94. The Radical SAM core domain occupies 100–339; sequence EEDRATLCVS…VTVRKTRGDD (240 aa). Cys107 and Cys344 are oxidised to a cystine. 3 residues coordinate [4Fe-4S] cluster: Cys114, Cys118, and Cys121. Residues 168–169, Ser200, 222–224, and Asn301 contribute to the S-adenosyl-L-methionine site; these read GE and SLH. Catalysis depends on Cys344, which acts as the S-methylcysteine intermediate.

It belongs to the radical SAM superfamily. RlmN family. Requires [4Fe-4S] cluster as cofactor.

It is found in the cytoplasm. It catalyses the reaction adenosine(2503) in 23S rRNA + 2 reduced [2Fe-2S]-[ferredoxin] + 2 S-adenosyl-L-methionine = 2-methyladenosine(2503) in 23S rRNA + 5'-deoxyadenosine + L-methionine + 2 oxidized [2Fe-2S]-[ferredoxin] + S-adenosyl-L-homocysteine. The catalysed reaction is adenosine(37) in tRNA + 2 reduced [2Fe-2S]-[ferredoxin] + 2 S-adenosyl-L-methionine = 2-methyladenosine(37) in tRNA + 5'-deoxyadenosine + L-methionine + 2 oxidized [2Fe-2S]-[ferredoxin] + S-adenosyl-L-homocysteine. Its function is as follows. Specifically methylates position 2 of adenine 2503 in 23S rRNA and position 2 of adenine 37 in tRNAs. m2A2503 modification seems to play a crucial role in the proofreading step occurring at the peptidyl transferase center and thus would serve to optimize ribosomal fidelity. The protein is Dual-specificity RNA methyltransferase RlmN of Vibrio parahaemolyticus serotype O3:K6 (strain RIMD 2210633).